The primary structure comprises 326 residues: Probable cell division protein WhiA (326 aa).

Residues 275 to 308 (SLDELGRLADPVMTKDAIAGRIRRLLAMADKRAL) constitute a DNA-binding region (H-T-H motif).

The protein belongs to the WhiA family.

In terms of biological role, involved in cell division and chromosome segregation. The sequence is that of Probable cell division protein WhiA from Pseudarthrobacter chlorophenolicus (strain ATCC 700700 / DSM 12829 / CIP 107037 / JCM 12360 / KCTC 9906 / NCIMB 13794 / A6) (Arthrobacter chlorophenolicus).